A 217-amino-acid polypeptide reads, in one-letter code: ATP phosphoribosyltransferase (217 aa).

This sequence belongs to the ATP phosphoribosyltransferase family. Short subfamily. Heteromultimer composed of HisG and HisZ subunits.

The protein localises to the cytoplasm. The catalysed reaction is 1-(5-phospho-beta-D-ribosyl)-ATP + diphosphate = 5-phospho-alpha-D-ribose 1-diphosphate + ATP. It participates in amino-acid biosynthesis; L-histidine biosynthesis; L-histidine from 5-phospho-alpha-D-ribose 1-diphosphate: step 1/9. In terms of biological role, catalyzes the condensation of ATP and 5-phosphoribose 1-diphosphate to form N'-(5'-phosphoribosyl)-ATP (PR-ATP). Has a crucial role in the pathway because the rate of histidine biosynthesis seems to be controlled primarily by regulation of HisG enzymatic activity. This Parasynechococcus marenigrum (strain WH8102) protein is ATP phosphoribosyltransferase.